Consider the following 360-residue polypeptide: Peptide chain release factor 1 (360 aa).

Position 237 is an N5-methylglutamine (Gln237).

Belongs to the prokaryotic/mitochondrial release factor family. Methylated by PrmC. Methylation increases the termination efficiency of RF1.

The protein localises to the cytoplasm. Peptide chain release factor 1 directs the termination of translation in response to the peptide chain termination codons UAG and UAA. In Pseudomonas syringae pv. tomato (strain ATCC BAA-871 / DC3000), this protein is Peptide chain release factor 1.